Here is a 137-residue protein sequence, read N- to C-terminus: Glycine cleavage system H protein (137 aa).

The region spanning proline 36–glutamate 118 is the Lipoyl-binding domain. An N6-lipoyllysine modification is found at lysine 77.

Belongs to the GcvH family. As to quaternary structure, the glycine cleavage system is composed of four proteins: P, T, L and H. (R)-lipoate serves as cofactor.

In terms of biological role, the glycine cleavage system catalyzes the degradation of glycine. The H protein shuttles the methylamine group of glycine from the P protein to the T protein. This is Glycine cleavage system H protein from Bifidobacterium longum (strain NCC 2705).